We begin with the raw amino-acid sequence, 89 residues long: Translation initiation factor IF-1, chloroplastic (89 aa).

The S1-like domain occupies methionine 1 to proline 73.

Belongs to the IF-1 family. As to quaternary structure, component of the 30S ribosomal translation pre-initiation complex which assembles on the 30S ribosome in the order IF-2 and IF-3, IF-1 and N-formylmethionyl-tRNA(fMet); mRNA recruitment can occur at any time during PIC assembly.

It is found in the plastid. It localises to the chloroplast. One of the essential components for the initiation of protein synthesis. Stabilizes the binding of IF-2 and IF-3 on the 30S subunit to which N-formylmethionyl-tRNA(fMet) subsequently binds. Helps modulate mRNA selection, yielding the 30S pre-initiation complex (PIC). Upon addition of the 50S ribosomal subunit IF-1, IF-2 and IF-3 are released leaving the mature 70S translation initiation complex. This Jasminum nudiflorum (Winter jasmine) protein is Translation initiation factor IF-1, chloroplastic.